The primary structure comprises 83 residues: Small ribosomal subunit protein uS17 (83 aa).

It belongs to the universal ribosomal protein uS17 family. In terms of assembly, part of the 30S ribosomal subunit.

In terms of biological role, one of the primary rRNA binding proteins, it binds specifically to the 5'-end of 16S ribosomal RNA. This chain is Small ribosomal subunit protein uS17, found in Zymomonas mobilis subsp. mobilis (strain ATCC 31821 / ZM4 / CP4).